The following is a 469-amino-acid chain: Ubiquitin carboxyl-terminal hydrolase MINDY-1 (469 aa).

Residues 1–105 form a disordered region; sequence MEHHQPEHPA…RLQELPQSPR (105 aa). Residues 23–44 show a composition bias toward basic and acidic residues; sequence ENHKVLSEPKEHPQDKDAKEAD. Position 103 is a phosphoserine (S103). C137 serves as the catalytic Nucleophile. Catalysis depends on H319, which acts as the Proton acceptor. Positions 388-428 are ubiquitin-binding domain (UBD); it reads QVDQDYLIALSLQQQQPPPQGTSGLSDLELAQQLQQEEYQQ. Residues 401-469 are disordered; it reads QQQPPPQGTS…PKQESDCVLL (69 aa). Low complexity predominate over residues 415–448; that stretch reads LELAQQLQQEEYQQHQAAQAAPARAPSPQGRGAA. A Phosphoserine modification is found at S441. Residues 453 to 469 show a composition bias toward basic and acidic residues; sequence AAERRQRPKQESDCVLL.

It belongs to the MINDY deubiquitinase family. FAM63 subfamily.

It carries out the reaction Thiol-dependent hydrolysis of ester, thioester, amide, peptide and isopeptide bonds formed by the C-terminal Gly of ubiquitin (a 76-residue protein attached to proteins as an intracellular targeting signal).. Hydrolase that can specifically remove 'Lys-48'-linked conjugated ubiquitin from proteins. Has exodeubiquitinase activity and has a preference for long polyubiquitin chains. May play a regulatory role at the level of protein turnover. In Bos taurus (Bovine), this protein is Ubiquitin carboxyl-terminal hydrolase MINDY-1 (MINDY1).